Here is a 549-residue protein sequence, read N- to C-terminus: Tegument protein (549 aa).

3 disordered regions span residues K50–P92, E353–Y391, and T523–P542. Polar residues-rich tracts occupy residues P75–S84 and D356–R369. Over residues T523–R534 the composition is skewed to low complexity.

Its function is as follows. This viral structural protein may have important functions, such as protein kinase activity, DNA binding, and possible transcriptional activation of immediate-early genes. This Homo sapiens (Human) protein is Tegument protein.